A 548-amino-acid chain; its full sequence is Chaperonin GroEL (548 aa).

ATP is bound by residues 30 to 33 (TLGP), K51, 87 to 91 (DGTTT), G415, and D495.

Belongs to the chaperonin (HSP60) family. As to quaternary structure, forms a cylinder of 14 subunits composed of two heptameric rings stacked back-to-back. Interacts with the co-chaperonin GroES.

The protein localises to the cytoplasm. The catalysed reaction is ATP + H2O + a folded polypeptide = ADP + phosphate + an unfolded polypeptide.. In terms of biological role, together with its co-chaperonin GroES, plays an essential role in assisting protein folding. The GroEL-GroES system forms a nano-cage that allows encapsulation of the non-native substrate proteins and provides a physical environment optimized to promote and accelerate protein folding. This Yersinia pseudotuberculosis serotype O:1b (strain IP 31758) protein is Chaperonin GroEL.